Consider the following 74-residue polypeptide: ATP synthase subunit 9, mitochondrial (74 aa).

Transmembrane regions (helical) follow at residues 16 to 36 (GLIGAGIGIGVVFGSLIIGVS) and 50 to 70 (ILGFAFSEATGLFALMMAFLL).

The protein belongs to the ATPase C chain family. As to quaternary structure, F-type ATPases have 2 components, CF(1) - the catalytic core - and CF(0) - the membrane proton channel. CF(1) has five subunits: alpha(3), beta(3), gamma(1), delta(1), epsilon(1). CF(0) has three main subunits: a, b and c.

The protein localises to the mitochondrion inner membrane. In terms of biological role, mitochondrial membrane ATP synthase (F(1)F(0) ATP synthase or Complex V) produces ATP from ADP in the presence of a proton gradient across the membrane which is generated by electron transport complexes of the respiratory chain. F-type ATPases consist of two structural domains, F(1) - containing the extramembraneous catalytic core and F(0) - containing the membrane proton channel, linked together by a central stalk and a peripheral stalk. During catalysis, ATP synthesis in the catalytic domain of F(1) is coupled via a rotary mechanism of the central stalk subunits to proton translocation. Part of the complex F(0) domain. A homomeric c-ring of probably 10 subunits is part of the complex rotary element. In Neurospora crassa (strain ATCC 24698 / 74-OR23-1A / CBS 708.71 / DSM 1257 / FGSC 987), this protein is ATP synthase subunit 9, mitochondrial (atp-9).